Reading from the N-terminus, the 141-residue chain is MLERTLSILKPDVVKRNITGQVNSYIENSGLKIVTQKMCLLTRFQAEEFYAIHKSQHFFIPLVDFMVSGPIIVQVLEGENAISLYRELMGATDPKKANPGTIRGDFAENIDANCVHGSDSLDNAVREIRFFFSDYELLSLK.

The ATP site is built by lysine 10, phenylalanine 58, arginine 86, threonine 92, arginine 103, and asparagine 113. The active-site Pros-phosphohistidine intermediate is the histidine 116.

Belongs to the NDK family. In terms of assembly, homotetramer. It depends on Mg(2+) as a cofactor.

It localises to the cytoplasm. It catalyses the reaction a 2'-deoxyribonucleoside 5'-diphosphate + ATP = a 2'-deoxyribonucleoside 5'-triphosphate + ADP. It carries out the reaction a ribonucleoside 5'-diphosphate + ATP = a ribonucleoside 5'-triphosphate + ADP. Functionally, major role in the synthesis of nucleoside triphosphates other than ATP. The ATP gamma phosphate is transferred to the NDP beta phosphate via a ping-pong mechanism, using a phosphorylated active-site intermediate. This Ehrlichia canis (strain Jake) protein is Nucleoside diphosphate kinase.